The following is a 466-amino-acid chain: Peptidyl-prolyl cis-trans isomerase CYP37, chloroplastic (466 aa).

Residues 1–65 (MASPLSSSTV…GTKELIHSCN (65 aa)) constitute a chloroplast transit peptide. Residues 66–114 (SSIDSKLNTFEAGSKNLEKLVATILIFVQVWSPLPLFGLDSAYISPAEA) constitute a thylakoid transit peptide. The PPIase cyclophilin-type domain maps to 278–466 (TFSAEAGGDQ…VQNNNINEST (189 aa)).

As to expression, aerial parts.

The protein resides in the plastid. It is found in the chloroplast thylakoid lumen. The catalysed reaction is [protein]-peptidylproline (omega=180) = [protein]-peptidylproline (omega=0). In terms of biological role, PPIases accelerate the folding of proteins. It catalyzes the cis-trans isomerization of proline imidic peptide bonds in oligopeptides. This is Peptidyl-prolyl cis-trans isomerase CYP37, chloroplastic (CYP37) from Arabidopsis thaliana (Mouse-ear cress).